A 213-amino-acid chain; its full sequence is UPF0301 protein RPC_0788 (213 aa).

The segment at 1 to 20 (MDPKSKAPKRDETKGADDAS) is disordered.

Belongs to the UPF0301 (AlgH) family.

This chain is UPF0301 protein RPC_0788, found in Rhodopseudomonas palustris (strain BisB18).